The following is a 147-amino-acid chain: UPF0735 ACT domain-containing protein BH1214 (147 aa).

The 76-residue stretch at 70-145 (TLSINLEDRS…AVEKVELVGS (76 aa)) folds into the ACT domain.

It belongs to the UPF0735 family.

The sequence is that of UPF0735 ACT domain-containing protein BH1214 from Halalkalibacterium halodurans (strain ATCC BAA-125 / DSM 18197 / FERM 7344 / JCM 9153 / C-125) (Bacillus halodurans).